The primary structure comprises 218 residues: uncharacterized protein (218 aa).

One can recognise a Toprim domain in the interval 111 to 193 (NSIYLVEGDF…ITKVIEIKAA (83 aa)).

This is an uncharacterized protein from Mycoplasma genitalium (strain ATCC 33530 / DSM 19775 / NCTC 10195 / G37) (Mycoplasmoides genitalium).